Here is a 218-residue protein sequence, read N- to C-terminus: Adenylate kinase (218 aa).

10–15 (GAGKGT) lines the ATP pocket. The segment at 30 to 59 (STGDMFRAAMADQTDLGVKAKAFIDKGELV) is NMP. Residues Thr31, Arg36, 57 to 59 (ELV), 85 to 88 (GFPR), and Gln92 each bind AMP. The segment at 126 to 164 (GRFICKTCGATYHKLYHPTQVEGTCDRCGGHVFFQREDD) is LID. Arg127 lines the ATP pocket. Zn(2+) is bound by residues Cys130 and Cys133. ATP is bound at residue 136 to 137 (TY). Positions 150 and 153 each coordinate Zn(2+). Positions 161 and 172 each coordinate AMP. Gln200 contacts ATP.

It belongs to the adenylate kinase family. In terms of assembly, monomer.

The protein resides in the cytoplasm. It carries out the reaction AMP + ATP = 2 ADP. It participates in purine metabolism; AMP biosynthesis via salvage pathway; AMP from ADP: step 1/1. Functionally, catalyzes the reversible transfer of the terminal phosphate group between ATP and AMP. Plays an important role in cellular energy homeostasis and in adenine nucleotide metabolism. The sequence is that of Adenylate kinase from Latilactobacillus sakei subsp. sakei (strain 23K) (Lactobacillus sakei subsp. sakei).